A 321-amino-acid polypeptide reads, in one-letter code: DNA-directed RNA polymerase subunit alpha (321 aa).

An alpha N-terminal domain (alpha-NTD) region spans residues 1–235; it reads MAYQIECLET…DLFSPLKEVP (235 aa). The tract at residues 252–321 is alpha C-terminal domain (alpha-CTD); the sequence is QIPIEQLNLS…TLPPQKAARN (70 aa).

It belongs to the RNA polymerase alpha chain family. As to quaternary structure, homodimer. In cyanobacteria the RNAP catalytic core is composed of 2 alpha, 1 beta, 1 beta', 1 gamma and 1 omega subunit. When a sigma factor is associated with the core the holoenzyme is formed, which can initiate transcription.

The catalysed reaction is RNA(n) + a ribonucleoside 5'-triphosphate = RNA(n+1) + diphosphate. Its function is as follows. DNA-dependent RNA polymerase catalyzes the transcription of DNA into RNA using the four ribonucleoside triphosphates as substrates. The protein is DNA-directed RNA polymerase subunit alpha of Thermosynechococcus vestitus (strain NIES-2133 / IAM M-273 / BP-1).